The following is a 104-amino-acid chain: MRFFSYLGLLLAGLTSLQGFSTDNLLEEELRYWCQYVKNCRFCWTCQDGLCKNKVLKDMSSVQEHSYPMEHCMIHRQCKYIRDGPIFQVECTMQTSDATHLINA.

The signal sequence occupies residues Met-1–Arg-31.

This sequence belongs to the asfivirus MGF 110 family.

Plays a role in virus cell tropism, and may be required for efficient virus replication in macrophages. The chain is Protein MGF 110-2L from African swine fever virus (strain Badajoz 1971 Vero-adapted) (Ba71V).